The primary structure comprises 96 residues: Uteroglobin (96 aa).

The N-terminal stretch at 1-21 is a signal peptide; sequence MKIAITITVVMLSICCSSASS.

The protein belongs to the secretoglobin family. As to quaternary structure, antiparallel homodimer; disulfide-linked. Interaction with LMBR1L is controversial. As to expression, club cells (nonciliated cells of the surface epithelium of the pulmonary airways).

It localises to the secreted. Functionally, binds phosphatidylcholine, phosphatidylinositol, polychlorinated biphenyls (PCB) and weakly progesterone, potent inhibitor of phospholipase A2. The protein is Uteroglobin (Scgb1a1) of Mus musculus (Mouse).